We begin with the raw amino-acid sequence, 282 residues long: Putative hydrolase Bcen_5340 (282 aa).

Mg(2+)-binding residues include E124, E126, and D155.

Belongs to the FAH family. The cofactor is Mg(2+).

The polypeptide is Putative hydrolase Bcen_5340 (Burkholderia orbicola (strain AU 1054)).